The sequence spans 607 residues: Transporter aclS (607 aa).

12 helical membrane passes run 67–87 (LGGSLVASSLSVWQTMVAVVL), 91–111 (IAAIVAILIGYIGAEWHIGFP), 152–172 (LTVVGFAFQSYTGGLCVTAIL), 192–212 (VTTQQIIGWAIFNIISIPVLY), 221–241 (LMIGMNIMSFAALLGIMIWSL), 262–282 (SLGFGIMQGITTVVGTLSIAL), 317–337 (VFGQWFTFIIIGSIMPLFGCL), 364–384 (AAAVFAGIGLVSSQLALNVVD), 423–443 (GCYVGLILGMALCPWELLASA), 445–465 (TFVSVISSFSIFMAPFCGIHI), 500–520 (GVLPWLVGWVPLLPGFMHSIN), and 531–551 (HLYALGFPYGLLSSMAIHTLV). The segment at 583 to 607 (NKDSTEEDSDRSLRRESREVVETKV) is disordered. Basic and acidic residues predominate over residues 592-607 (DRSLRRESREVVETKV).

It belongs to the purine-cytosine permease (2.A.39) family.

Its subcellular location is the membrane. Functionally, transporter; part of the gene cluster that mediates the biosynthesis of aspirochlorine (or antibiotic A30641), an unusual halogenated spiro compound with distinctive antifungal properties due to selective inhibition of protein biosynthesis, and which is also active against bacteria, viruses, and murine tumor cells. This Aspergillus oryzae (strain ATCC 42149 / RIB 40) (Yellow koji mold) protein is Transporter aclS.